The chain runs to 859 residues: Leucine--tRNA ligase (859 aa).

The short motif at 42–52 is the 'HIGH' region element; it reads PYPSGRLHMGH. Positions 618–622 match the 'KMSKS' region motif; it reads KMSKS. Position 621 (lysine 621) interacts with ATP.

Belongs to the class-I aminoacyl-tRNA synthetase family.

Its subcellular location is the cytoplasm. It catalyses the reaction tRNA(Leu) + L-leucine + ATP = L-leucyl-tRNA(Leu) + AMP + diphosphate. In Shewanella sp. (strain MR-7), this protein is Leucine--tRNA ligase.